Consider the following 134-residue polypeptide: Putative cytochrome c oxidase subunit 6b-like (134 aa).

A disordered region spans residues 1–61 (MSSAQMDPHD…DSGRETDAAV (61 aa)). Basic and acidic residues-rich tracts occupy residues 7–19 (DPHD…DISK) and 44–61 (ATFR…DAAV). A CHCH domain is found at 71-114 (TRHCFNRFMQYHKCIEKNGRDANDCNNLRDYVRSICPEELVSKI). The short motif at 74–84 (CFNRFMQYHKC) is the Cx9C motif element. Disulfide bonds link Cys74–Cys106 and Cys84–Cys95. Residues 95-106 (CNNLRDYVRSIC) carry the Cx10C motif motif.

Belongs to the cytochrome c oxidase subunit 6B (TC 3.D.4.8) family.

It localises to the mitochondrion. This protein is one of the nuclear-coded polypeptide chains of cytochrome c oxidase, the terminal oxidase in mitochondrial electron transport. This protein may be one of the heme-binding subunits of the oxidase. The chain is Putative cytochrome c oxidase subunit 6b-like from Arabidopsis thaliana (Mouse-ear cress).